The primary structure comprises 345 residues: Twinfilin (345 aa).

2 consecutive ADF-H domains span residues 4-139 (QTGI…KHKR) and 177-312 (GISC…DELH). Residues 320–345 (PAFAKPKGPPNRGAKRLTRPSNEDQV) form a disordered region.

It belongs to the actin-binding proteins ADF family. Twinfilin subfamily. Interacts with G-actin; ADP-actin form.

It localises to the cytoplasm. The protein localises to the cytoskeleton. Its subcellular location is the cell cortex. In terms of biological role, actin-binding protein involved in motile and morphological processes. Inhibits actin polymerization, likely by sequestering G-actin. The chain is Twinfilin (twf) from Drosophila pseudoobscura pseudoobscura (Fruit fly).